The sequence spans 543 residues: Chaperonin GroEL 2 (543 aa).

Residues 29-32, 86-90, Gly-413, 479-481, and Asp-495 contribute to the ATP site; these read TLGP, DGTTT, and NAA.

The protein belongs to the chaperonin (HSP60) family. In terms of assembly, forms a cylinder of 14 subunits composed of two heptameric rings stacked back-to-back. Interacts with the co-chaperonin GroES.

Its subcellular location is the cytoplasm. The enzyme catalyses ATP + H2O + a folded polypeptide = ADP + phosphate + an unfolded polypeptide.. Functionally, together with its co-chaperonin GroES, plays an essential role in assisting protein folding. The GroEL-GroES system forms a nano-cage that allows encapsulation of the non-native substrate proteins and provides a physical environment optimized to promote and accelerate protein folding. The protein is Chaperonin GroEL 2 of Prochlorococcus marinus (strain NATL1A).